The sequence spans 292 residues: Ventral anterior homeobox 2 (292 aa).

Positions 1 to 36 (MGDGGAERDRGPKRREEPGGRSGCRGEHRGAEDLRA) are enriched in basic and acidic residues. The interval 1-74 (MGDGGAERDR…DGQQALGETD (74 aa)) is disordered. Residues 38-55 (TGSTSPREIAGTSASSPA) are compositionally biased toward polar residues. A DNA-binding region (homeobox) is located at residues 102–161 (PKRTRTSFTAEQLYRLEMEFQRCQYVVGRERTELARQLNLSETQVKVWFQNRRTKQKKDQ). A disordered region spans residues 212–241 (AGHRGTSLGDPRNSSQRLNPMPSASASSPL).

Belongs to the EMX homeobox family.

It is found in the nucleus. Functionally, transcription factor that may function in dorsoventral specification of the forebrain. Regulates the expression of Wnt signaling antagonists including the expression of a truncated TCF7L2 isoform that cannot bind CTNNB1 and acts therefore as a potent dominant-negative Wnt antagonist. Plays a crucial role in eye development and, in particular, in the specification of the ventral optic vesicle. May be a regulator of axial polarization in the retina. This chain is Ventral anterior homeobox 2 (Vax2), found in Rattus norvegicus (Rat).